Reading from the N-terminus, the 348-residue chain is Isopentenyl-diphosphate delta-isomerase (348 aa).

14–15 provides a ligand contact to substrate; it reads RK. FMN contacts are provided by residues Ser72, 73-75, Ser103, and Asn131; that span reads SMT. Substrate is bound at residue 103–105; the sequence is SQR. Gln166 is a binding site for substrate. Glu167 provides a ligand contact to Mg(2+). Residues Lys198, Thr228, 278–280, and 299–300 contribute to the FMN site; these read GIR and AR.

The protein belongs to the IPP isomerase type 2 family. As to quaternary structure, homooctamer. Dimer of tetramers. FMN serves as cofactor. Requires NADPH as cofactor. The cofactor is Mg(2+).

The protein resides in the cytoplasm. It catalyses the reaction isopentenyl diphosphate = dimethylallyl diphosphate. Functionally, involved in the biosynthesis of isoprenoids. Catalyzes the 1,3-allylic rearrangement of the homoallylic substrate isopentenyl (IPP) to its allylic isomer, dimethylallyl diphosphate (DMAPP). This chain is Isopentenyl-diphosphate delta-isomerase, found in Synechococcus sp. (strain ATCC 27144 / PCC 6301 / SAUG 1402/1) (Anacystis nidulans).